Here is a 70-residue protein sequence, read N- to C-terminus: MPIGGDVKADQETSGSRSIKRIGFGFIGGIGYDITPNITLDLGYRYNDWGRLENVRFKTHEASFGVRYRF.

It belongs to the opacity porin family.

This is an uncharacterized protein from Haemophilus influenzae (strain ATCC 51907 / DSM 11121 / KW20 / Rd).